Consider the following 612-residue polypeptide: Transcription factor unc-37 (612 aa).

A disordered region spans residues 143–228; the sequence is FASPHVNGGD…SNSRARQQQQ (86 aa). A compositionally biased stretch (gly residues) spans 150-159; the sequence is GGDGAGGSSG. Residues 153 to 196 form a CCN domain region; the sequence is GAGGSSGGASEAKKAKLEDPDDGELEIDVTNDDHPSTASNGGAA. Over residues 171-182 the composition is skewed to acidic residues; that stretch reads DPDDGELEIDVT. Over residues 202 to 221 the composition is skewed to polar residues; the sequence is DSTNSVASSGASTPSIASNS. WD repeat units follow at residues 308-339, 372-402, 414-444, 456-486, 538-568, and 579-609; these read GIPTGLKKKMELNHGEVVCAATISRDNSRVYT, LKENYIRSCKLFEDGNTLLIGGEASTVALWD, TDSQACYALAMSPDEKLLFACLADGNILIYD, GHQDGASCLDLSKDGTKLWSGGLDNSVRCWD, QHESCVLSLKFAHSGKFFISTGKDNALNAWR, and KENSSVLSCDISFDDSLIVTGSGEKKATLYA.

The protein belongs to the WD repeat Groucho/TLE family. As to quaternary structure, interacts with unc-4. Interacts with ref-1. May interact with mls-1.

The protein resides in the nucleus. Transcriptional corepressor that functions with the neural specificity gene unc-4 to govern motor neuron identity. In concert with unc-4, represses the expression of VB-specific genes such as ceh-12, thereby preventing the adoption of VB motor neuron fate. May function with transcription factor mls-1 to promote uterine muscle specification and formation. The sequence is that of Transcription factor unc-37 (unc-37) from Caenorhabditis elegans.